The primary structure comprises 198 residues: Glycerol-3-phosphate acyltransferase (198 aa).

A run of 5 helical transmembrane segments spans residues 6 to 26, 56 to 78, 83 to 101, 113 to 133, and 154 to 174; these read MLPV…GLIL, LAAA…AGYL, AAML…PVWL, IGIL…VWLA, and IVLW…LTLL.

This sequence belongs to the PlsY family. In terms of assembly, probably interacts with PlsX.

It localises to the cell inner membrane. It carries out the reaction an acyl phosphate + sn-glycerol 3-phosphate = a 1-acyl-sn-glycero-3-phosphate + phosphate. It functions in the pathway lipid metabolism; phospholipid metabolism. In terms of biological role, catalyzes the transfer of an acyl group from acyl-phosphate (acyl-PO(4)) to glycerol-3-phosphate (G3P) to form lysophosphatidic acid (LPA). This enzyme utilizes acyl-phosphate as fatty acyl donor, but not acyl-CoA or acyl-ACP. The protein is Glycerol-3-phosphate acyltransferase of Bradyrhizobium sp. (strain ORS 278).